Consider the following 308-residue polypeptide: Ectoine dioxygenase (308 aa).

Q131 contacts L-ectoine. A 2-oxoglutarate-binding site is contributed by K137. H148, D150, and H249 together coordinate Fe cation.

It belongs to the PhyH family. EctD subfamily. In terms of assembly, homodimer. The cofactor is Fe(2+).

The catalysed reaction is L-ectoine + 2-oxoglutarate + O2 = 5-hydroxyectoine + succinate + CO2. Functionally, involved in the biosynthesis of 5-hydroxyectoine, called compatible solute, which helps organisms to survive extreme osmotic stress by acting as a highly soluble organic osmolyte. Catalyzes the 2-oxoglutarate-dependent selective hydroxylation of L-ectoine to yield (4S,5S)-5-hydroxyectoine. The chain is Ectoine dioxygenase from Bordetella parapertussis (strain 12822 / ATCC BAA-587 / NCTC 13253).